The primary structure comprises 737 residues: Exostosin-1c (737 aa).

At 1-6 (MQARKK) the chain is on the cytoplasmic side. A helical; Signal-anchor for type II membrane protein membrane pass occupies residues 7–27 (YVLLGLCTCCWILLYYWAGLQ). The Lumenal portion of the chain corresponds to 28 to 737 (ERLLGLITHR…RKRYKDLERV (710 aa)). Residues asparagine 194 and asparagine 322 are each glycosylated (N-linked (GlcNAc...) asparagine). UDP-N-acetyl-alpha-D-glucosamine-binding residues include arginine 432, arginine 540, aspartate 556, glutamate 557, aspartate 558, glutamate 644, aspartate 645, and arginine 692. Aspartate 558 lines the Mn(2+) pocket. The cysteines at positions 643 and 695 are disulfide-linked. Residue aspartate 645 is part of the active site.

It belongs to the glycosyltransferase 47 family. Mn(2+) serves as cofactor.

It is found in the endoplasmic reticulum membrane. It carries out the reaction 3-O-{[(1-&gt;4)-beta-D-GlcA-(1-&gt;4)-alpha-D-GlcNAc](n)-(1-&gt;4)-beta-D-GlcA-(1-&gt;3)-beta-D-Gal-(1-&gt;3)-beta-D-Gal-(1-&gt;4)-beta-D-Xyl}-L-seryl-[protein] + UDP-N-acetyl-alpha-D-glucosamine = 3-O-{alpha-D-GlcNAc-[(1-&gt;4)-beta-D-GlcA-(1-&gt;4)-alpha-D-GlcNAc](n)-(1-&gt;4)-beta-D-GlcA-(1-&gt;3)-beta-D-Gal-(1-&gt;3)-beta-D-Gal-(1-&gt;4)-beta-D-Xyl}-L-seryl-[protein] + UDP + H(+). It catalyses the reaction 3-O-{alpha-D-GlcNAc-[(1-&gt;4)-beta-D-GlcA-(1-&gt;4)-alpha-D-GlcNAc](n)-(1-&gt;4)-beta-D-GlcA-(1-&gt;3)-beta-D-Gal-(1-&gt;3)-beta-D-Gal-(1-&gt;4)-beta-D-Xyl}-L-seryl-[protein] + UDP-alpha-D-glucuronate = 3-O-{[(1-&gt;4)-beta-D-GlcA-(1-&gt;4)-alpha-D-GlcNAc](n+1)-(1-&gt;4)-beta-D-GlcA-(1-&gt;3)-beta-D-Gal-(1-&gt;3)-beta-D-Gal-(1-&gt;4)-beta-D-Xyl}-L-seryl-[protein] + UDP + H(+). Its pathway is protein modification; protein glycosylation. Glycosyltransferase required for the biosynthesis of heparan-sulfate. This Danio rerio (Zebrafish) protein is Exostosin-1c (ext1c).